We begin with the raw amino-acid sequence, 1411 residues long: DNA-directed RNA polymerase subunit beta' (1411 aa).

The Zn(2+) site is built by Cys-70, Cys-72, Cys-85, and Cys-88. Mg(2+) contacts are provided by Asp-458, Asp-460, and Asp-462. Zn(2+) contacts are provided by Cys-813, Cys-887, Cys-894, and Cys-897. The tract at residues 1384 to 1411 is disordered; the sequence is AEAAEMATTGSDEAPEVEGSGVESGSAE.

Belongs to the RNA polymerase beta' chain family. As to quaternary structure, the RNAP catalytic core consists of 2 alpha, 1 beta, 1 beta' and 1 omega subunit. When a sigma factor is associated with the core the holoenzyme is formed, which can initiate transcription. The cofactor is Mg(2+). Zn(2+) is required as a cofactor.

It catalyses the reaction RNA(n) + a ribonucleoside 5'-triphosphate = RNA(n+1) + diphosphate. Functionally, DNA-dependent RNA polymerase catalyzes the transcription of DNA into RNA using the four ribonucleoside triphosphates as substrates. This chain is DNA-directed RNA polymerase subunit beta', found in Paracidovorax citrulli (strain AAC00-1) (Acidovorax citrulli).